The following is a 479-amino-acid chain: Beta-monoglucosyldiacylglycerol synthase (479 aa).

Helical transmembrane passes span 48-68, 363-383, 389-409, and 428-448; these read AAVM…WVWG, FLLM…MALW, LLTP…YYGL, and LART…MPAV.

Belongs to the glycosyltransferase 2 family. The cofactor is Mg(2+).

The protein localises to the membrane. It catalyses the reaction a 1,2-diacyl-sn-glycerol + UDP-alpha-D-glucose = a 1,2-diacyl-3-O-(beta-D-glucopyranosyl)-sn-glycerol + UDP + H(+). Its function is as follows. Glucosyltransferase involved in the biosynthesis of the non-bilayer-forming membrane lipid beta-monoglucosyldiacylglycerol which contributes to regulate the properties and stability of the membrane. Catalyzes the transfer of a glucosyl residue from UDP-Glc to diacylglycerol (DAG) acceptor to form the corresponding beta-glucosyl-DAG (1,2-diacyl-3-O-(beta-D-glucopyranosyl)-sn-glycerol). It can only use UDP-Glc as sugar donor. Two types of DAG (dipalmitoyl-DAG (DPDAG) and 1-oleoyl-2-palmitoyl-DAG (OPDAG)) can be used as sugar acceptors, but OPDAG is preferred. The chain is Beta-monoglucosyldiacylglycerol synthase from Synechocystis sp. (strain ATCC 27184 / PCC 6803 / Kazusa).